A 68-amino-acid polypeptide reads, in one-letter code: Figainin 1 (68 aa).

The N-terminal stretch at 1–22 is a signal peptide; that stretch reads MAFLKKSLFLVLFLGLVSLSIG. Residues 23 to 45 are disordered; sequence EEEKREEEEKNEEGANQEENAEN. Positions 23–47 are excised as a propeptide; it reads EEEKREEEEKNEEGANQEENAENKE. Acidic residues predominate over residues 26–42; it reads KREEEEKNEEGANQEEN. The residue at position 67 (lysine 67) is a Lysine amide.

In terms of tissue distribution, expressed by the skin glands.

The protein resides in the secreted. In terms of biological role, antimicrobial peptide that displays antibacterial and antiprotozoal activity. Exhibits antibacterial activity against the Gram-positive bacteria S.epidermidis ATCC 12228 (MIC=2 uM), E.casseliflavus ATCC 700327 (MIC=16 uM), S.aureus ATCC 25923 (MIC=4 uM) and E.faecalis ATCC 29212 (MIC=8 uM), and the Gram-negative bacteria E.coli ATCC 25922 (MIC=16 uM) and K.pneumoniae ATCC 13883 (MIC=4 uM). Displays antiprotozoal activity against the epimastigote form of T.cruzi (IC(50)=15.9 uM). Does not show antimicrobial activity against the Gram-negative bacterium P.aeruginosa ATCC 27853, or the fungi C.albicans ATCC 90028 and C.parapsilosis ATCC 22019. Shows high cytolytic activity against human erythrocytes (HC(50)=10 uM), and displays anti-proliferative effects against various cancer cell lines including MCF-7 breast cancer cells (IC(50)=13.7 uM), HeLa cervical adenocarcinoma cells (IC(50)=11.1 uM) and B16F10 murine melanoma cells (IC(50)=10.5 uM). The protein is Figainin 1 of Boana raniceps (Chaco tree frog).